We begin with the raw amino-acid sequence, 204 residues long: Guanylate kinase (204 aa).

The Guanylate kinase-like domain occupies 1–182; that stretch reads MLYIISAPSG…ALSDLNTIIC (182 aa). 7-14 contributes to the ATP binding site; it reads APSGTGKS.

This sequence belongs to the guanylate kinase family.

The protein localises to the cytoplasm. It catalyses the reaction GMP + ATP = GDP + ADP. Its function is as follows. Essential for recycling GMP and indirectly, cGMP. This Baumannia cicadellinicola subsp. Homalodisca coagulata protein is Guanylate kinase.